A 270-amino-acid polypeptide reads, in one-letter code: Sulfur carrier protein FdhD (270 aa).

Residue C108 is the Cysteine persulfide intermediate of the active site. Residue 247 to 252 (FIRDGR) coordinates Mo-bis(molybdopterin guanine dinucleotide).

Belongs to the FdhD family.

The protein resides in the cytoplasm. Functionally, required for formate dehydrogenase (FDH) activity. Acts as a sulfur carrier protein that transfers sulfur from IscS to the molybdenum cofactor prior to its insertion into FDH. This Halalkalibacterium halodurans (strain ATCC BAA-125 / DSM 18197 / FERM 7344 / JCM 9153 / C-125) (Bacillus halodurans) protein is Sulfur carrier protein FdhD.